Here is a 420-residue protein sequence, read N- to C-terminus: Light-independent protochlorophyllide reductase subunit N (420 aa).

Positions 21, 46, and 103 each coordinate [4Fe-4S] cluster.

It belongs to the BchN/ChlN family. As to quaternary structure, protochlorophyllide reductase is composed of three subunits; BchL, BchN and BchB. Forms a heterotetramer of two BchB and two BchN subunits. [4Fe-4S] cluster serves as cofactor.

It carries out the reaction chlorophyllide a + oxidized 2[4Fe-4S]-[ferredoxin] + 2 ADP + 2 phosphate = protochlorophyllide a + reduced 2[4Fe-4S]-[ferredoxin] + 2 ATP + 2 H2O. The protein operates within porphyrin-containing compound metabolism; bacteriochlorophyll biosynthesis (light-independent). Functionally, component of the dark-operative protochlorophyllide reductase (DPOR) that uses Mg-ATP and reduced ferredoxin to reduce ring D of protochlorophyllide (Pchlide) to form chlorophyllide a (Chlide). This reaction is light-independent. The NB-protein (BchN-BchB) is the catalytic component of the complex. The polypeptide is Light-independent protochlorophyllide reductase subunit N (Chlorobium luteolum (strain DSM 273 / BCRC 81028 / 2530) (Pelodictyon luteolum)).